A 67-amino-acid chain; its full sequence is DNA-directed RNA polymerase subunit omega (67 aa).

The protein belongs to the RNA polymerase subunit omega family. The RNAP catalytic core consists of 2 alpha, 1 beta, 1 beta' and 1 omega subunit. When a sigma factor is associated with the core the holoenzyme is formed, which can initiate transcription.

It carries out the reaction RNA(n) + a ribonucleoside 5'-triphosphate = RNA(n+1) + diphosphate. Promotes RNA polymerase assembly. Latches the N- and C-terminal regions of the beta' subunit thereby facilitating its interaction with the beta and alpha subunits. The chain is DNA-directed RNA polymerase subunit omega from Bordetella pertussis (strain Tohama I / ATCC BAA-589 / NCTC 13251).